Here is a 619-residue protein sequence, read N- to C-terminus: Phosphomethylpyrimidine synthase (619 aa).

Residues 1 to 11 (MHEQRSLTMNA) show a composition bias toward polar residues. Residues 1–25 (MHEQRSLTMNALTPAVSTGPLPASR) are disordered. Residues Asn-220, Met-249, Tyr-278, His-314, 334-336 (SRG), 375-378 (DGLR), and Glu-414 contribute to the substrate site. Zn(2+) is bound at residue His-418. Tyr-441 provides a ligand contact to substrate. His-482 lines the Zn(2+) pocket. Positions 562, 565, and 570 each coordinate [4Fe-4S] cluster.

The protein belongs to the ThiC family. As to quaternary structure, homodimer. [4Fe-4S] cluster serves as cofactor.

The enzyme catalyses 5-amino-1-(5-phospho-beta-D-ribosyl)imidazole + S-adenosyl-L-methionine = 4-amino-2-methyl-5-(phosphooxymethyl)pyrimidine + CO + 5'-deoxyadenosine + formate + L-methionine + 3 H(+). Its pathway is cofactor biosynthesis; thiamine diphosphate biosynthesis. Its function is as follows. Catalyzes the synthesis of the hydroxymethylpyrimidine phosphate (HMP-P) moiety of thiamine from aminoimidazole ribotide (AIR) in a radical S-adenosyl-L-methionine (SAM)-dependent reaction. The sequence is that of Phosphomethylpyrimidine synthase from Mesorhizobium japonicum (strain LMG 29417 / CECT 9101 / MAFF 303099) (Mesorhizobium loti (strain MAFF 303099)).